Reading from the N-terminus, the 35-residue chain is MEALVYTFLLVSTLGIIFFAIFFREPPKIQTKKMK.

The chain crosses the membrane as a helical span at residues 3 to 23; it reads ALVYTFLLVSTLGIIFFAIFF.

This sequence belongs to the PsbT family. PSII is composed of 1 copy each of membrane proteins PsbA, PsbB, PsbC, PsbD, PsbE, PsbF, PsbH, PsbI, PsbJ, PsbK, PsbL, PsbM, PsbT, PsbY, PsbZ, Psb30/Ycf12, at least 3 peripheral proteins of the oxygen-evolving complex and a large number of cofactors. It forms dimeric complexes.

Its subcellular location is the plastid. The protein localises to the chloroplast thylakoid membrane. Found at the monomer-monomer interface of the photosystem II (PS II) dimer, plays a role in assembly and dimerization of PSII. PSII is a light-driven water plastoquinone oxidoreductase, using light energy to abstract electrons from H(2)O, generating a proton gradient subsequently used for ATP formation. The polypeptide is Photosystem II reaction center protein T (Suaeda aralocaspica (Seablite)).